The primary structure comprises 236 residues: Uridylate kinase (236 aa).

12-15 (KISG) contributes to the ATP binding site. The involved in allosteric activation by GTP stretch occupies residues 20–25 (GTNGYG). Residue Gly-54 participates in UMP binding. ATP contacts are provided by Gly-55 and Arg-59. Residues Asp-72 and 133 to 140 (TGNPYFST) each bind UMP. Tyr-166 and Asp-169 together coordinate ATP.

It belongs to the UMP kinase family. Homohexamer.

It is found in the cytoplasm. The enzyme catalyses UMP + ATP = UDP + ADP. It participates in pyrimidine metabolism; CTP biosynthesis via de novo pathway; UDP from UMP (UMPK route): step 1/1. Its activity is regulated as follows. Allosterically activated by GTP. Inhibited by UTP. Its function is as follows. Catalyzes the reversible phosphorylation of UMP to UDP. This is Uridylate kinase from Clostridium acetobutylicum (strain ATCC 824 / DSM 792 / JCM 1419 / IAM 19013 / LMG 5710 / NBRC 13948 / NRRL B-527 / VKM B-1787 / 2291 / W).